We begin with the raw amino-acid sequence, 255 residues long: Probable transcriptional regulatory protein PCC8801_2028 (255 aa).

This sequence belongs to the TACO1 family.

It localises to the cytoplasm. This chain is Probable transcriptional regulatory protein PCC8801_2028, found in Rippkaea orientalis (strain PCC 8801 / RF-1) (Cyanothece sp. (strain PCC 8801)).